The chain runs to 122 residues: Replication termination protein (122 aa).

In terms of assembly, homodimer.

Plays a role in DNA replication and termination (fork arrest mechanism). Two dimers of rtp bind to the two inverted repeat regions (IRI and IRII) present in the termination site. The binding of each dimer is centered on an 8 bp direct repeat. In Bacillus spizizenii (strain ATCC 23059 / NRRL B-14472 / W23) (Bacillus subtilis subsp. spizizenii), this protein is Replication termination protein (rtp).